Consider the following 425-residue polypeptide: Enolase (425 aa).

Residue Gln162 participates in (2R)-2-phosphoglycerate binding. Glu204 serves as the catalytic Proton donor. Mg(2+)-binding residues include Asp241, Glu282, and Asp309. (2R)-2-phosphoglycerate-binding residues include Lys334, Arg363, Ser364, and Lys385. Lys334 functions as the Proton acceptor in the catalytic mechanism.

The protein belongs to the enolase family. Requires Mg(2+) as cofactor.

It is found in the cytoplasm. Its subcellular location is the secreted. The protein localises to the cell surface. The catalysed reaction is (2R)-2-phosphoglycerate = phosphoenolpyruvate + H2O. It functions in the pathway carbohydrate degradation; glycolysis; pyruvate from D-glyceraldehyde 3-phosphate: step 4/5. In terms of biological role, catalyzes the reversible conversion of 2-phosphoglycerate (2-PG) into phosphoenolpyruvate (PEP). It is essential for the degradation of carbohydrates via glycolysis. This chain is Enolase, found in Corynebacterium jeikeium (strain K411).